The chain runs to 132 residues: S-protein homolog 19 (132 aa).

An N-terminal signal peptide occupies residues 1 to 26 (MSGSLAFHIIMSVTFMVFFFGGLCEA). An N-linked (GlcNAc...) asparagine glycan is attached at asparagine 87.

Belongs to the plant self-incompatibility (S1) protein family.

The protein localises to the secreted. This is S-protein homolog 19 from Arabidopsis thaliana (Mouse-ear cress).